A 141-amino-acid polypeptide reads, in one-letter code: Nucleoside diphosphate kinase (141 aa).

6 residues coordinate ATP: lysine 11, phenylalanine 59, arginine 87, threonine 93, arginine 104, and asparagine 114. The active-site Pros-phosphohistidine intermediate is the histidine 117.

It belongs to the NDK family. In terms of assembly, homotetramer. The cofactor is Mg(2+).

It is found in the cytoplasm. It catalyses the reaction a 2'-deoxyribonucleoside 5'-diphosphate + ATP = a 2'-deoxyribonucleoside 5'-triphosphate + ADP. The enzyme catalyses a ribonucleoside 5'-diphosphate + ATP = a ribonucleoside 5'-triphosphate + ADP. Major role in the synthesis of nucleoside triphosphates other than ATP. The ATP gamma phosphate is transferred to the NDP beta phosphate via a ping-pong mechanism, using a phosphorylated active-site intermediate. The polypeptide is Nucleoside diphosphate kinase (Burkholderia thailandensis (strain ATCC 700388 / DSM 13276 / CCUG 48851 / CIP 106301 / E264)).